The sequence spans 261 residues: Short-chain dehydrogenase/reductase AFUA_1G00990 (261 aa).

The NADP(+) site is built by Leu19, Asp67, Asn94, Tyr169, Lys173, and Thr213. Tyr169 (proton donor) is an active-site residue. The active-site Lowers pKa of active site Tyr is Lys173.

It belongs to the short-chain dehydrogenases/reductases (SDR) family.

Its function is as follows. Short-chain dehydrogenase/reductase; part of the gene cluster that mediates the biosynthesis of fumigermin that inhibits germination of spores of the inducing S.rapamycinicus, and thus helps the fungus to defend resources in the shared habitat against a bacterial competitor. The partially reducing polyketide synthase fngA alone is sufficient for the production of fumigermin. FgnA catalyzes the condensation of 3 malonyl-CoA units to an acetyl-CoA starter, and 3 methylations to yield fumigermin. It is remarkable that the five cluster genes including fgnA are conserved in distantly related fungi, supporting the assumption of a fumigermin cluster; it is thus possible that originally all five genes were functional, but that the genes encoding tailoring enzymes became inactive from mutations, similar to the case of the fgnA gene in strains A1163 and Af293. The polypeptide is Short-chain dehydrogenase/reductase AFUA_1G00990 (Aspergillus fumigatus (strain ATCC MYA-4609 / CBS 101355 / FGSC A1100 / Af293) (Neosartorya fumigata)).